A 447-amino-acid polypeptide reads, in one-letter code: Drebrin-like protein A (447 aa).

One can recognise an ADF-H domain in the interval 2-133 (SVNLSKNGAA…EPESIMEKVA (132 aa)). Disordered stretches follow at residues 141-160 (NFHKESKRGNEGPQGPVGSV) and 184-368 (KDEE…TENQ). Positions 180–245 (AKAEKDEEER…EQEETEKQQT (66 aa)) form a coiled coil. Basic and acidic residues predominate over residues 184 to 242 (KDEEERRMEENRRANSEKDRLERERKEREQREAETREQRFRERAKEIDAQRKEQEETEK). Positions 246–255 (VPASQRSVNP) are enriched in polar residues. Residues 319 to 328 (PESPVPPVSH) show a composition bias toward pro residues. The segment covering 345–365 (QEEENIYQDATEDQNIYEDTT) has biased composition (acidic residues). The 60-residue stretch at 388 to 447 (EKGVCARALYDYQAADDTEISFDPDDLITQIQFIDEGWWRGFSPAGHFGMFPANYVELLE) folds into the SH3 domain.

Belongs to the ABP1 family.

The protein resides in the cytoplasm. The protein localises to the cytoskeleton. It is found in the cell projection. It localises to the lamellipodium. Its subcellular location is the ruffle. The protein resides in the cell cortex. The protein localises to the cytosol. It is found in the synapse. It localises to the perikaryon. Its subcellular location is the neuron projection. The protein resides in the cell membrane. The protein localises to the cytoplasmic vesicle. It is found in the clathrin-coated vesicle membrane. It localises to the golgi apparatus membrane. Its subcellular location is the podosome. The protein resides in the early endosome. The protein localises to the dendrite. It is found in the postsynaptic density. Functionally, adapter protein that binds F-actin and dynamin, and thereby plays a role in receptor-mediated endocytosis. Plays a role in the reorganization of the actin cytoskeleton, formation of cell projections, such as neurites, in neuron morphogenesis and synapse formation. Does not bind G-actin and promote actin polymerization by itself, but excerts its functions by interaction with other proteins. Required for the formation of organized podosome rosettes. The polypeptide is Drebrin-like protein A (dbnl-a) (Xenopus laevis (African clawed frog)).